The sequence spans 248 residues: Triosephosphate isomerase (248 aa).

Residues N10 and K12 each contribute to the substrate site. Catalysis depends on H95, which acts as the Electrophile. The active-site Proton acceptor is E165.

It belongs to the triosephosphate isomerase family. Homodimer.

It catalyses the reaction D-glyceraldehyde 3-phosphate = dihydroxyacetone phosphate. It functions in the pathway carbohydrate biosynthesis; gluconeogenesis. It participates in carbohydrate degradation; glycolysis; D-glyceraldehyde 3-phosphate from glycerone phosphate: step 1/1. In Neurospora crassa (strain ATCC 24698 / 74-OR23-1A / CBS 708.71 / DSM 1257 / FGSC 987), this protein is Triosephosphate isomerase (tpi-1).